Here is a 312-residue protein sequence, read N- to C-terminus: Olfactory receptor 6C74 (312 aa).

The Extracellular segment spans residues 1–23 (MRNHTTVANFILLGLTDDPQLQV). N3 carries N-linked (GlcNAc...) asparagine glycosylation. The helical transmembrane segment at 24–44 (IIFLLLFFTYMLSITGNLTII) threads the bilayer. Residues 45–63 (TLTLLDLHLKTPMYFFLRN) lie on the Cytoplasmic side of the membrane. The helical transmembrane segment at 64–84 (FSFLEVSFTTVYIPKFLVSMA) threads the bilayer. At 85–95 (TGDKTISYNDC) the chain is on the extracellular side. A disulfide bridge links C95 with C177. A helical transmembrane segment spans residues 96–116 (AAQLFFTILLGATEFFLLAAM). Residues 117-140 (SYERYVAICKPLHYTTIMSSRVCS) lie on the Cytoplasmic side of the membrane. A helical transmembrane segment spans residues 141–161 (LLVFASWMAGFLIIFPPLLMG). Over 162-194 (LQLDFCAANTVDHFFCDVSPILQLSCTDTDIIE) the chain is Extracellular. The chain crosses the membrane as a helical span at residues 195–215 (LMMLLSAILTLLVTLVLVILS). The Cytoplasmic portion of the chain corresponds to 216 to 237 (YTNIIRTILKIPSSQQRKKAFS). Residues 238-258 (TCSSHMVVVSISYGSCIFMYV) form a helical membrane-spanning segment. Topologically, residues 259–269 (KPSAKERVSLN) are extracellular. The chain crosses the membrane as a helical span at residues 270–290 (KGIALLSTSVAPMLNPFIYTL). Topologically, residues 291–312 (RNKQVKDVFKHTVKKIELFSMK) are cytoplasmic.

The protein belongs to the G-protein coupled receptor 1 family.

Its subcellular location is the cell membrane. In terms of biological role, odorant receptor. This is Olfactory receptor 6C74 (OR6C74) from Homo sapiens (Human).